The chain runs to 333 residues: Acetoin:2,6-dichlorophenolindophenol oxidoreductase subunit alpha (333 aa).

As to quaternary structure, tetramer of 2 alpha and 2 beta subunits. Thiamine diphosphate serves as cofactor.

It functions in the pathway ketone degradation; acetoin degradation. Functionally, catalyzes the 2,6-dichlorophenolindophenol-dependent cleavage of acetoin into acetate and acetaldehyde. The alpha subunit is probably the catalytic subunit of the enzyme. This is Acetoin:2,6-dichlorophenolindophenol oxidoreductase subunit alpha (acoA) from Bacillus subtilis (strain 168).